The following is a 375-amino-acid chain: UPF0612 protein C569.003 (375 aa).

This sequence belongs to the UPF0612 family.

The protein resides in the cytoplasm. The polypeptide is UPF0612 protein C569.003 (Schizosaccharomyces pombe (strain 972 / ATCC 24843) (Fission yeast)).